The following is a 340-amino-acid chain: Anthranilate phosphoribosyltransferase (340 aa).

5-phospho-alpha-D-ribose 1-diphosphate is bound by residues glycine 79, 82 to 83 (GD), threonine 87, 89 to 92 (NIST), 107 to 115 (KHGNRAVTG), and serine 119. Glycine 79 lines the anthranilate pocket. Serine 91 provides a ligand contact to Mg(2+). Position 110 (asparagine 110) interacts with anthranilate. Arginine 165 provides a ligand contact to anthranilate. Aspartate 224 and glutamate 225 together coordinate Mg(2+).

This sequence belongs to the anthranilate phosphoribosyltransferase family. Homodimer. The cofactor is Mg(2+).

It catalyses the reaction N-(5-phospho-beta-D-ribosyl)anthranilate + diphosphate = 5-phospho-alpha-D-ribose 1-diphosphate + anthranilate. It participates in amino-acid biosynthesis; L-tryptophan biosynthesis; L-tryptophan from chorismate: step 2/5. Functionally, catalyzes the transfer of the phosphoribosyl group of 5-phosphorylribose-1-pyrophosphate (PRPP) to anthranilate to yield N-(5'-phosphoribosyl)-anthranilate (PRA). This Syntrophomonas wolfei subsp. wolfei (strain DSM 2245B / Goettingen) protein is Anthranilate phosphoribosyltransferase.